Reading from the N-terminus, the 308-residue chain is Olfactory receptor 2T6 (308 aa).

The Extracellular portion of the chain corresponds to methionine 1–phenylalanine 28. The N-linked (GlcNAc...) asparagine glycan is linked to asparagine 5. The chain crosses the membrane as a helical span at residues glycine 29–isoleucine 49. Topologically, residues asparagine 50–threonine 57 are cytoplasmic. Residues proline 58–valine 78 form a helical membrane-spanning segment. Residues proline 79–threonine 98 lie on the Extracellular side of the membrane. Cysteine 97 and cysteine 179 are disulfide-bonded. A helical membrane pass occupies residues alanine 99–alanine 119. At tyrosine 120 to leucine 145 the chain is on the cytoplasmic side. A helical membrane pass occupies residues alanine 146–leucine 166. Residues proline 167–cysteine 203 lie on the Extracellular side of the membrane. A helical membrane pass occupies residues valine 204–threonine 224. Residues valine 225 to lysine 236 are Cytoplasmic-facing. A helical membrane pass occupies residues alanine 237–tyrosine 257. Residues threonine 258 to aspartate 271 lie on the Extracellular side of the membrane. Residues lysine 272–leucine 292 form a helical membrane-spanning segment. At arginine 293–cysteine 308 the chain is on the cytoplasmic side.

Belongs to the G-protein coupled receptor 1 family.

It localises to the cell membrane. Odorant receptor. In Homo sapiens (Human), this protein is Olfactory receptor 2T6 (OR2T6).